The following is a 660-amino-acid chain: Peroxisomal acyl-coenzyme A oxidase 1 (660 aa).

Ser26 carries the phosphoserine modification. 2 positions are modified to N6-succinyllysine: Lys89 and Lys90. The FAD site is built by Thr139 and Gly178. The residue at position 216 (Lys216) is an N6-acetyllysine. Lys241 bears the N6-succinyllysine mark. Lys255, Lys267, and Lys272 each carry N6-acetyllysine. Lys349 carries the N6-succinyllysine modification. Glu421 functions as the Proton acceptor in the catalytic mechanism. 2 positions are modified to N6-acetyllysine; alternate: Lys437 and Lys446. 2 positions are modified to N6-succinyllysine; alternate: Lys437 and Lys446. Residues Lys500 and Lys504 each carry the N6-acetyllysine modification. An N6-acetyllysine; alternate modification is found at Lys512. At Lys512 the chain carries N6-succinyllysine; alternate. At Lys542 the chain carries N6-succinyllysine. N6-acetyllysine; alternate is present on Lys637. Residue Lys637 is modified to N6-succinyllysine; alternate. Lys643 is modified (N6-succinyllysine). Ser649 is subject to Phosphoserine. Lys651 carries the post-translational modification N6-acetyllysine. Lys654 bears the N6-succinyllysine mark. The Microbody targeting signal motif lies at Ser658–Leu660.

The protein belongs to the acyl-CoA oxidase family. In terms of assembly, homodimer. Interacts with LONP2. Requires FAD as cofactor. As to expression, widely expressed with highest levels of isoform 1 and isoform 2 detected in testis. Isoform 1 is expressed at higher levels than isoform 2 in liver and kidney while isoform 2 levels are higher in brain, lung, muscle, white adipose tissue and testis. Levels are almost equal in heart.

It localises to the peroxisome. It carries out the reaction a 2,3-saturated acyl-CoA + O2 = a (2E)-enoyl-CoA + H2O2. The catalysed reaction is hexadecanoyl-CoA + O2 = (2E)-hexadecenoyl-CoA + H2O2. The enzyme catalyses dodecanoyl-CoA + O2 = (2E)-dodecenoyl-CoA + H2O2. It catalyses the reaction octanoyl-CoA + O2 = (2E)-octenoyl-CoA + H2O2. It carries out the reaction decanoyl-CoA + O2 = (2E)-decenoyl-CoA + H2O2. The catalysed reaction is tetradecanoyl-CoA + O2 = (2E)-tetradecenoyl-CoA + H2O2. The enzyme catalyses hexadecanedioyl-CoA + O2 = (2E)-hexadecenedioyl-CoA + H2O2. It catalyses the reaction (5Z,8Z,11Z,14Z,17Z)-eicosapentaenoyl-CoA + O2 = (2E,5Z,8Z,11Z,14Z,17Z)-icosahexaenoyl-CoA + H2O2. It carries out the reaction tetracosanoyl-CoA + O2 = (2E)-tetracosenoyl-CoA + H2O2. The catalysed reaction is glutaryl-CoA + O2 = (2E)-glutaconyl-CoA + H2O2. The enzyme catalyses hexanoyl-CoA + O2 = (2E)-hexenoyl-CoA + H2O2. It catalyses the reaction octadecanoyl-CoA + O2 = (2E)-octadecenoyl-CoA + H2O2. It carries out the reaction (6Z,9Z,12Z,15Z,18Z,21Z)-tetracosahexaenoyl-CoA + O2 = (2E,6Z,9Z,12Z,15Z,18Z,21Z)-tetracosaheptaenoyl-CoA + H2O2. It functions in the pathway lipid metabolism; peroxisomal fatty acid beta-oxidation. Functionally, involved in the initial and rate-limiting step of peroxisomal beta-oxidation of straight-chain saturated and unsaturated very-long-chain fatty acids. Catalyzes the desaturation of fatty acyl-CoAs such as palmitoyl-CoA (hexadecanoyl-CoA) to 2-trans-enoyl-CoAs ((2E)-enoyl-CoAs) such as (2E)-hexadecenoyl-CoA, and donates electrons directly to molecular oxygen (O(2)), thereby producing hydrogen peroxide (H(2)O(2)). Its function is as follows. Shows highest activity against medium-chain fatty acyl-CoAs. Shows optimum activity with a chain length of 10 carbons (decanoyl-CoA) in vitro. Is active against a much broader range of substrates and shows activity towards long-chain fatty acyl-CoAs. The chain is Peroxisomal acyl-coenzyme A oxidase 1 from Homo sapiens (Human).